Reading from the N-terminus, the 409-residue chain is MHAWPASEVPVLPGKGRDLRIHDTATDGLITLDPGPVARIYVCGITPYDATHMGHAATYNAFDLVQRVWLDTKRQVHYVQNVTDVDDPLLERAARDDIDWVALAEKETALFREDMTALRMLPPRHYIGAVEAIPGIVPLVERLLASGAAYELEGDVYFSVEADPDFGKVSRLDAATMRLLSAERGGDPDRAGKKNPLDPMLWMAAREGEPSWDGGSLGRGRPGWHIECVAIALDHLGMGFDVQGGGSDLAFPHHEMGASHAQALTGEFPMAKAYVHAGMVALHGEKMSKSKGNLVFVSALRRDGVDPAAIRLALLAHHYRADWEWTDQVLQDAVDRLGRWRAAVSRPDGPPAEALVEEIREALAHDLDAPAALAAVDRWAALQEERGGTDEGAPGVVSRAVDALLGVAL.

Cys-43 serves as a coordination point for Zn(2+). Residues 43-46 (CGIT), Thr-58, and 81-83 (NVT) contribute to the L-cysteinyl-5'-AMP site. The 'HIGH' region signature appears at 45–55 (ITPYDATHMGH). Residues 183–188 (ERGGDP) carry the 'ERGGDP' region motif. Residue Trp-224 coordinates L-cysteinyl-5'-AMP. Cys-228 contacts Zn(2+). 246-248 (GSD) is a binding site for L-cysteinyl-5'-AMP. Residue His-253 coordinates Zn(2+). Val-280 lines the L-cysteinyl-5'-AMP pocket. Positions 286-290 (KMSKS) match the 'KMSKS' region motif.

It belongs to the class-I aminoacyl-tRNA synthetase family. MshC subfamily. Monomer. It depends on Zn(2+) as a cofactor.

The catalysed reaction is 1D-myo-inositol 2-amino-2-deoxy-alpha-D-glucopyranoside + L-cysteine + ATP = 1D-myo-inositol 2-(L-cysteinylamino)-2-deoxy-alpha-D-glucopyranoside + AMP + diphosphate + H(+). Its function is as follows. Catalyzes the ATP-dependent condensation of GlcN-Ins and L-cysteine to form L-Cys-GlcN-Ins. The sequence is that of L-cysteine:1D-myo-inositol 2-amino-2-deoxy-alpha-D-glucopyranoside ligase from Streptomyces scabiei (strain 87.22).